A 148-amino-acid chain; its full sequence is Protoporphyrinogen IX oxidase (148 aa).

The next 4 membrane-spanning stretches (helical) occupy residues 7 to 27 (YFLW…AALF), 58 to 78 (SFIA…MLLI), 86 to 106 (GGWL…HFYC), and 128 to 148 (FNEA…VKPF). H15 serves as a coordination point for heme. K92 provides a ligand contact to heme.

Belongs to the HemJ family. In terms of assembly, homodimer. Heme b serves as cofactor.

Its subcellular location is the cell membrane. It carries out the reaction protoporphyrinogen IX + 3 A = protoporphyrin IX + 3 AH2. It functions in the pathway porphyrin-containing compound metabolism; protoporphyrin-IX biosynthesis; protoporphyrin-IX from protoporphyrinogen-IX: step 1/1. Its function is as follows. Catalyzes the oxidation of protoporphyrinogen IX to protoporphyrin IX. Is involved in the biosynthesis of tetrapyrrole molecules like heme. Does not use oxygen or artificial electron acceptors such as menadione or benzoquinone. This is Protoporphyrinogen IX oxidase from Helicobacter pylori (strain ATCC 700392 / 26695) (Campylobacter pylori).